Reading from the N-terminus, the 823-residue chain is Fibroblast growth factor receptor 2 (823 aa).

The signal sequence occupies residues 1–23; that stretch reads MVSWDSGCLICLVVVTMAGLSLA. Residues 24 to 379 lie on the Extracellular side of the membrane; the sequence is RPSFNLVVED…EFPTSPDYLE (356 aa). The region spanning 27–128 is the Ig-like C2-type 1 domain; sequence FNLVVEDATL…DTLYFIVNVT (102 aa). C65 and C110 are joined by a disulfide. N-linked (GlcNAc...) asparagine glycosylation is found at N86, N126, and N148. Ig-like C2-type domains follow at residues 156 to 249 and 258 to 360; these read PYWT…YHLD and PILQ…AWLT. Positions 163 to 180 are heparin-binding; the sequence is KMEKRLHAVPAANTVKFR. C181 and C233 form a disulfide bridge. N-linked (GlcNAc...) asparagine glycosylation is found at N230, N243, N267, N299, N320, and N333. Residues C280 and C344 are joined by a disulfide bond. Residues 380-400 form a helical membrane-spanning segment; it reads IAIYCIGVFLIACMVLTVILC. Residues 401–823 lie on the Cytoplasmic side of the membrane; the sequence is RMKNTTKKPD…YQHMNGSVKT (423 aa). Y468 carries the phosphotyrosine; by autocatalysis modification. Residues 483 to 772 enclose the Protein kinase domain; the sequence is LTLGKPLGEG…LTLTTNEEYL (290 aa). Residues 489–497, K519, 567–569, and N573 contribute to the ATP site; these read LGEGCFGQV and EYA. Residue Y588 is modified to Phosphotyrosine; by autocatalysis. Catalysis depends on D628, which acts as the Proton acceptor. Residues Y658, Y659, and Y771 each carry the phosphotyrosine; by autocatalysis modification.

This sequence belongs to the protein kinase superfamily. Tyr protein kinase family. Fibroblast growth factor receptor subfamily. As to quaternary structure, monomer. Homodimer after ligand binding. Post-translationally, autophosphorylated. Binding of FGF family members together with heparan sulfate proteoglycan or heparin promotes receptor dimerization and autophosphorylation on tyrosine residues. Autophosphorylation occurs in trans between the two FGFR molecules present in the dimer. In terms of processing, N-glycosylated in the endoplasmic reticulum. The N-glycan chains undergo further maturation to an Endo H-resistant form in the Golgi apparatus. Ubiquitinated. FGFR2 is rapidly ubiquitinated after autophosphorylation, leading to internalization and degradation. Subject to degradation both in lysosomes and by the proteasome.

The protein resides in the cell membrane. It is found in the golgi apparatus. It localises to the cytoplasmic vesicle. The catalysed reaction is L-tyrosyl-[protein] + ATP = O-phospho-L-tyrosyl-[protein] + ADP + H(+). Present in an inactive conformation in the absence of bound ligand. Ligand binding leads to dimerization and activation by autophosphorylation on tyrosine residues. In terms of biological role, tyrosine-protein kinase that acts as a cell-surface receptor for fibroblast growth factors and plays an essential role in the regulation of cell proliferation, differentiation, migration and apoptosis, and in the regulation of embryonic development. Required for normal embryonic patterning, limb bud development, lung morphogenesis, osteogenesis and skin development. Plays an essential role in the regulation of osteoblast differentiation, proliferation and apoptosis, and is required for normal skeleton development. Promotes cell proliferation in keratinocytes and immature osteoblasts, but promotes apoptosis in differentiated osteoblasts. Phosphorylates PLCG1, FRS2 and PAK4. Ligand binding leads to the activation of several signaling cascades. Activation of PLCG1 leads to the production of the cellular signaling molecules diacylglycerol and inositol 1,4,5-trisphosphate. Phosphorylation of FRS2 triggers recruitment of GRB2, GAB1, PIK3R1 and SOS1, and mediates activation of RAS, MAPK1/ERK2, MAPK3/ERK1 and the MAP kinase signaling pathway, as well as of the AKT1 signaling pathway. FGFR2 signaling is down-regulated by ubiquitination, internalization and degradation. Mutations that lead to constitutive kinase activation or impair normal FGFR2 maturation, internalization and degradation lead to aberrant signaling. Over-expressed FGFR2 promotes activation of STAT1. This is Fibroblast growth factor receptor 2 (FGFR2) from Gallus gallus (Chicken).